The chain runs to 333 residues: Photosystem II assembly lipoprotein Ycf48 (333 aa).

Positions 1-23 are cleaved as a signal peptide; sequence MKRLLNSATQLLLVLVLGISLSG. C24 is lipidated: N-palmitoyl cysteine. C24 carries S-diacylglycerol cysteine lipidation.

This sequence belongs to the Ycf48 family. Part of early PSII assembly complexes which includes D1 (psbA) and PsbI; not found in mature PSII. Binds to the lumenal side of PSII complexes. Interacts with YidC.

The protein localises to the cellular thylakoid membrane. Its function is as follows. A factor required for optimal assembly of photosystem II (PSII), acting in the early stages of PSII assembly. Also plays a role in replacement of photodamaged D1 (psbA). Assists YidC in synthesis of chlorophyll-binding proteins. This Synechococcus sp. (strain CC9605) protein is Photosystem II assembly lipoprotein Ycf48.